Here is a 1374-residue protein sequence, read N- to C-terminus: L-2-aminoadipate reductase large subunit (1374 aa).

Residues Ser-828–Lys-905 form the Carrier domain. Residue Ser-865 is modified to O-(pantetheine 4'-phosphoryl)serine.

It belongs to the ATP-dependent AMP-binding enzyme family. In terms of assembly, heterodimer of an alpha and a beta subunit. Pantetheine 4'-phosphate serves as cofactor.

It carries out the reaction (S)-2-amino-6-oxohexanoate + NADP(+) + H2O = L-2-aminoadipate + NADPH + 2 H(+). The enzyme catalyses (S)-2-amino-6-oxohexanoate + NAD(+) + H2O = L-2-aminoadipate + NADH + 2 H(+). It catalyses the reaction (S)-2-amino-6-oxohexanoate + AMP + diphosphate + NADP(+) = L-2-aminoadipate + ATP + NADPH + H(+). It participates in amino-acid biosynthesis; L-lysine biosynthesis via AAA pathway; L-lysine from L-alpha-aminoadipate (fungal route): step 1/3. Its function is as follows. Catalyzes the activation of alpha-aminoadipate by ATP-dependent adenylation and the reduction of activated alpha-aminoadipate by NADPH. The activated alpha-aminoadipate is bound to the phosphopantheinyl group of the enzyme itself before it is reduced to (S)-2-amino-6-oxohexanoate. This Candida glabrata (strain ATCC 2001 / BCRC 20586 / JCM 3761 / NBRC 0622 / NRRL Y-65 / CBS 138) (Yeast) protein is L-2-aminoadipate reductase large subunit (LYS2).